The following is a 74-amino-acid chain: Spore germination protein GerE (74 aa).

In terms of domain architecture, HTH luxR-type spans Glu-5 to Gly-70. Positions Thr-29 to Ser-48 form a DNA-binding region, H-T-H motif.

In terms of biological role, involved in the regulation of spore formation. Directs the transcription of several genes that encode structural components of the protein coat that encases the mature spore (CotB, CotC, CotG, CotS, CotV, CotW, CotX, CotY and CotZ). Also controls the cgeAB and cgeCDE operons. The polypeptide is Spore germination protein GerE (gerE) (Bacillus subtilis (strain 168)).